The following is an 821-amino-acid chain: Ent-pimara-8(14),15-diene synthase (821 aa).

Mg(2+) is bound by residues aspartate 556, aspartate 560, asparagine 701, threonine 705, and glutamate 709. A DDXXD motif motif is present at residues 556–560; the sequence is DDFFD.

The protein belongs to the terpene synthase family. Requires Mg(2+) as cofactor. As to expression, highly expressed in roots, at intermediate levels in stems and at lower levels in leaves.

It catalyses the reaction ent-copalyl diphosphate = ent-pimara-8(14),15-diene + diphosphate. It functions in the pathway secondary metabolite biosynthesis; terpenoid biosynthesis. In terms of biological role, involved in the biosynthesis of ent-kaurene diterpenoids natural products. Catalyzes the conversion of ent-copalyl diphosphate to ent-pimara-8(14),15-diene. The sequence is that of Ent-pimara-8(14),15-diene synthase from Oryza sativa subsp. japonica (Rice).